A 197-amino-acid polypeptide reads, in one-letter code: MAVVPIRIVGDPVLRTETTPIPVGDDGSLPAEVADLIRDLYETMDAANGVGLAANQIGVSQRVFVYDCPDSRGRAGRRRGVVINPVLETSDIPETMPDPDDDEEGCLSVPGEQFPTGRADWARVTGLDADGSPITVEGTGLFARMLQHETGHLDGFLYLDRLIGRHARAAKRAVKHNGWGVPGLSWTPGEDPDPFGH.

2 residues coordinate Fe cation: Cys-106 and His-148. Glu-149 is a catalytic residue. Fe cation is bound at residue His-152.

This sequence belongs to the polypeptide deformylase family. The cofactor is Fe(2+).

It carries out the reaction N-terminal N-formyl-L-methionyl-[peptide] + H2O = N-terminal L-methionyl-[peptide] + formate. Its function is as follows. Removes the formyl group from the N-terminal Met of newly synthesized proteins. Requires at least a dipeptide for an efficient rate of reaction. N-terminal L-methionine is a prerequisite for activity but the enzyme has broad specificity at other positions. This Mycobacterium sp. (strain JLS) protein is Peptide deformylase.